The sequence spans 73 residues: UPF0352 protein APJL_0577 (73 aa).

It belongs to the UPF0352 family.

In Actinobacillus pleuropneumoniae serotype 3 (strain JL03), this protein is UPF0352 protein APJL_0577.